A 264-amino-acid chain; its full sequence is Major prion protein (264 aa).

An N-terminal signal peptide occupies residues M1–C24. An interaction with GRB2, ERI3 and SYN1 region spans residues K25–A241. The disordered stretch occupies residues R27–N119. Repeat copies occupy residues S54–Q62, P63–Q70, P71–Q78, P79–Q86, P87–Q94, and P95–Q103. The 6 X 8 AA tandem repeats of P-H-G-G-G-W-G-Q stretch occupies residues S54–Q103. Over residues Q55–G105 the composition is skewed to gly residues. Cu(2+) contacts are provided by H72, G73, G74, H80, G81, G82, H88, G89, G90, H96, G98, and G99. Residues C190 and C225 are joined by a disulfide bond. N-linked (GlcNAc...) asparagine glycans are attached at residues N192 and N208. A241 carries GPI-anchor amidated alanine lipidation. Residues S242 to G264 constitute a propeptide, removed in mature form.

The protein belongs to the prion family. In terms of assembly, monomer and homodimer. Has a tendency to aggregate into amyloid fibrils containing a cross-beta spine, formed by a steric zipper of superposed beta-strands. Soluble oligomers may represent an intermediate stage on the path to fibril formation. Copper binding may promote oligomerization. Interacts with GRB2, APP, ERI3/PRNPIP and SYN1. Mislocalized cytosolically exposed PrP interacts with MGRN1; this interaction alters MGRN1 subcellular location and causes lysosomal enlargement. Interacts with KIAA1191.

The protein localises to the cell membrane. The protein resides in the golgi apparatus. Functionally, its primary physiological function is unclear. Has cytoprotective activity against internal or environmental stresses. May play a role in neuronal development and synaptic plasticity. May be required for neuronal myelin sheath maintenance. May play a role in iron uptake and iron homeostasis. Soluble oligomers are toxic to cultured neuroblastoma cells and induce apoptosis (in vitro). Association with GPC1 (via its heparan sulfate chains) targets PRNP to lipid rafts. Also provides Cu(2+) or Zn(2+) for the ascorbate-mediated GPC1 deaminase degradation of its heparan sulfate side chains. This chain is Major prion protein (PRNP), found in Bubalus bubalis (Domestic water buffalo).